We begin with the raw amino-acid sequence, 166 residues long: Phospholipase A2 inhibitor clone 05 (166 aa).

Residues 1–19 form the signal peptide; that stretch reads MRLILLSSLLLLGIFLADG. The C-type lectin domain maps to 46–161; sequence LKGAFLTVHR…CDDNLLVVCE (116 aa). Intrachain disulfides connect C83–C160 and C138–C152. Residue N122 is glycosylated (N-linked (GlcNAc...) asparagine).

This sequence belongs to the alpha-type phospholipase A2 inhibitor family. As to quaternary structure, homotrimer; non-covalently linked. In terms of tissue distribution, expressed by the liver.

The protein localises to the secreted. Its function is as follows. This phospholipase A2 inhibitor binds directly phospholipase A2 in the presence or absence of calcium. This Bothrops moojeni (Lance-headed viper) protein is Phospholipase A2 inhibitor clone 05.